A 243-amino-acid chain; its full sequence is Exosome complex component Rrp41 (243 aa).

The protein belongs to the RNase PH family. Rrp41 subfamily. As to quaternary structure, component of the archaeal exosome complex. Forms a hexameric ring-like arrangement composed of 3 Rrp41-Rrp42 heterodimers. The hexameric ring associates with a trimer of Rrp4 and/or Csl4 subunits.

The protein localises to the cytoplasm. Its function is as follows. Catalytic component of the exosome, which is a complex involved in RNA degradation. Has 3'-&gt;5' exoribonuclease activity. Can also synthesize heteromeric RNA-tails. The sequence is that of Exosome complex component Rrp41 from Cenarchaeum symbiosum (strain A).